A 251-amino-acid chain; its full sequence is Adenosylcobinamide-GDP ribazoletransferase (251 aa).

Helical transmembrane passes span 29-49, 65-85, 110-130, 136-156, 175-195, and 198-218; these read FAGM…ILAV, SLLI…DGAM, AFGA…LCYL, LLIL…IVRY, AIDL…IARF, and LTVA…TGAW.

The protein belongs to the CobS family. Mg(2+) is required as a cofactor.

The protein localises to the cell inner membrane. It carries out the reaction alpha-ribazole + adenosylcob(III)inamide-GDP = adenosylcob(III)alamin + GMP + H(+). The enzyme catalyses alpha-ribazole 5'-phosphate + adenosylcob(III)inamide-GDP = adenosylcob(III)alamin 5'-phosphate + GMP + H(+). It functions in the pathway cofactor biosynthesis; adenosylcobalamin biosynthesis; adenosylcobalamin from cob(II)yrinate a,c-diamide: step 7/7. Functionally, joins adenosylcobinamide-GDP and alpha-ribazole to generate adenosylcobalamin (Ado-cobalamin). Also synthesizes adenosylcobalamin 5'-phosphate from adenosylcobinamide-GDP and alpha-ribazole 5'-phosphate. This chain is Adenosylcobinamide-GDP ribazoletransferase, found in Synechococcus elongatus (strain ATCC 33912 / PCC 7942 / FACHB-805) (Anacystis nidulans R2).